The primary structure comprises 340 residues: Heat-inducible transcription repressor HrcA (340 aa).

Belongs to the HrcA family.

Negative regulator of class I heat shock genes (grpE-dnaK-dnaJ and groELS operons). Prevents heat-shock induction of these operons. The polypeptide is Heat-inducible transcription repressor HrcA (Burkholderia ambifaria (strain MC40-6)).